We begin with the raw amino-acid sequence, 917 residues long: Translation initiation factor IF-2 (917 aa).

Residues E102–E249 are compositionally biased toward basic and acidic residues. Residues E102 to H326 form a disordered region. The segment covering R279–N293 has biased composition (basic residues). The span at R294–A306 shows a compositional bias: basic and acidic residues. Residues S416–K585 form the tr-type G domain. The G1 stretch occupies residues G425–T432. Position 425–432 (G425–T432) interacts with GTP. Residues G450–H454 form a G2 region. The segment at D471–G474 is G3. GTP contacts are provided by residues D471–H475 and N525–D528. Residues N525 to D528 are G4. Residues S561–K563 are G5.

The protein belongs to the TRAFAC class translation factor GTPase superfamily. Classic translation factor GTPase family. IF-2 subfamily.

It localises to the cytoplasm. Its function is as follows. One of the essential components for the initiation of protein synthesis. Protects formylmethionyl-tRNA from spontaneous hydrolysis and promotes its binding to the 30S ribosomal subunits. Also involved in the hydrolysis of GTP during the formation of the 70S ribosomal complex. The protein is Translation initiation factor IF-2 (infB) of Proteus vulgaris.